Reading from the N-terminus, the 169-residue chain is Inorganic pyrophosphatase (169 aa).

Methionine 1 carries the N-formylmethionine modification. 3 residues coordinate substrate: lysine 28, arginine 42, and tyrosine 54. The Mg(2+) site is built by aspartate 64, aspartate 69, and aspartate 101. Residue tyrosine 138 participates in substrate binding.

This sequence belongs to the PPase family. As to quaternary structure, homohexamer. Mg(2+) is required as a cofactor.

It localises to the cytoplasm. It catalyses the reaction diphosphate + H2O = 2 phosphate + H(+). Inhibited by ATP, but not by fructose 1,6-bisphosphate or 2-phosphoglycerate. Hydrolyzes PPi generated in anabolic reactions. Functionally, catalyzes the hydrolysis of inorganic pyrophosphate (PPi) forming two phosphate ions. In Synechocystis sp. (strain ATCC 27184 / PCC 6803 / Kazusa), this protein is Inorganic pyrophosphatase.